An 85-amino-acid polypeptide reads, in one-letter code: Small ribosomal subunit protein bS20 (85 aa).

It belongs to the bacterial ribosomal protein bS20 family.

In terms of biological role, binds directly to 16S ribosomal RNA. This is Small ribosomal subunit protein bS20 from Borrelia turicatae (strain 91E135).